A 203-amino-acid polypeptide reads, in one-letter code: 3-isopropylmalate dehydratase small subunit (203 aa).

Belongs to the LeuD family. LeuD type 1 subfamily. As to quaternary structure, heterodimer of LeuC and LeuD.

It catalyses the reaction (2R,3S)-3-isopropylmalate = (2S)-2-isopropylmalate. It functions in the pathway amino-acid biosynthesis; L-leucine biosynthesis; L-leucine from 3-methyl-2-oxobutanoate: step 2/4. Catalyzes the isomerization between 2-isopropylmalate and 3-isopropylmalate, via the formation of 2-isopropylmaleate. This Rhodospirillum centenum (strain ATCC 51521 / SW) protein is 3-isopropylmalate dehydratase small subunit.